We begin with the raw amino-acid sequence, 336 residues long: Anthranilate phosphoribosyltransferase (336 aa).

Residues Gly-79, 82–83 (GD), Thr-87, 89–92 (NISS), 107–115 (KHGNRSVSS), and Ser-119 each bind 5-phospho-alpha-D-ribose 1-diphosphate. Anthranilate is bound at residue Gly-79. Ser-91 provides a ligand contact to Mg(2+). Asn-110 provides a ligand contact to anthranilate. Arg-165 is a binding site for anthranilate. Mg(2+) contacts are provided by Asp-223 and Glu-224.

It belongs to the anthranilate phosphoribosyltransferase family. In terms of assembly, homodimer. Mg(2+) is required as a cofactor.

The enzyme catalyses N-(5-phospho-beta-D-ribosyl)anthranilate + diphosphate = 5-phospho-alpha-D-ribose 1-diphosphate + anthranilate. It functions in the pathway amino-acid biosynthesis; L-tryptophan biosynthesis; L-tryptophan from chorismate: step 2/5. Functionally, catalyzes the transfer of the phosphoribosyl group of 5-phosphorylribose-1-pyrophosphate (PRPP) to anthranilate to yield N-(5'-phosphoribosyl)-anthranilate (PRA). In Tolumonas auensis (strain DSM 9187 / NBRC 110442 / TA 4), this protein is Anthranilate phosphoribosyltransferase.